The chain runs to 429 residues: Phosphoribosylamine--glycine ligase (429 aa).

Positions 109-316 (KDFLARHNIP…LVELCQAAIA (208 aa)) constitute an ATP-grasp domain. 135-196 (VREKGAPIVV…EEFLDGEEAS (62 aa)) contacts ATP. Positions 286 and 288 each coordinate Mg(2+).

Belongs to the GARS family. It depends on Mg(2+) as a cofactor. Mn(2+) is required as a cofactor.

It carries out the reaction 5-phospho-beta-D-ribosylamine + glycine + ATP = N(1)-(5-phospho-beta-D-ribosyl)glycinamide + ADP + phosphate + H(+). It participates in purine metabolism; IMP biosynthesis via de novo pathway; N(1)-(5-phospho-D-ribosyl)glycinamide from 5-phospho-alpha-D-ribose 1-diphosphate: step 2/2. The polypeptide is Phosphoribosylamine--glycine ligase (Vibrio cholerae serotype O1 (strain ATCC 39315 / El Tor Inaba N16961)).